The primary structure comprises 158 residues: 2-C-methyl-D-erythritol 2,4-cyclodiphosphate synthase (158 aa).

Positions 9 and 11 each coordinate a divalent metal cation. 4-CDP-2-C-methyl-D-erythritol 2-phosphate contacts are provided by residues 9 to 11 and 35 to 36; these read DVH and HS. His-43 lines the a divalent metal cation pocket. 4-CDP-2-C-methyl-D-erythritol 2-phosphate contacts are provided by residues 57–59, 62–66, 133–136, Phe-140, and Arg-143; these read DIG, FPDTD, and TTSE.

Belongs to the IspF family. As to quaternary structure, homotrimer. It depends on a divalent metal cation as a cofactor.

The catalysed reaction is 4-CDP-2-C-methyl-D-erythritol 2-phosphate = 2-C-methyl-D-erythritol 2,4-cyclic diphosphate + CMP. The protein operates within isoprenoid biosynthesis; isopentenyl diphosphate biosynthesis via DXP pathway; isopentenyl diphosphate from 1-deoxy-D-xylulose 5-phosphate: step 4/6. In terms of biological role, involved in the biosynthesis of isopentenyl diphosphate (IPP) and dimethylallyl diphosphate (DMAPP), two major building blocks of isoprenoid compounds. Catalyzes the conversion of 4-diphosphocytidyl-2-C-methyl-D-erythritol 2-phosphate (CDP-ME2P) to 2-C-methyl-D-erythritol 2,4-cyclodiphosphate (ME-CPP) with a corresponding release of cytidine 5-monophosphate (CMP). The protein is 2-C-methyl-D-erythritol 2,4-cyclodiphosphate synthase of Pasteurella multocida (strain Pm70).